The sequence spans 999 residues: Cytoplasmic dynein 2 intermediate chain 1 (999 aa).

Composition is skewed to basic and acidic residues over residues 1-19 (MEPG…DDLR), 29-138 (PKEE…EEIR), 146-260 (LLSR…EDRH), and 268-300 (GLHY…KELE). Residues 1–350 (MEPGKRRTKD…EHEAREKAEE (350 aa)) form a disordered region. Ser250 carries the post-translational modification Phosphoserine. The segment covering 318–338 (LEDDFVDYEDDFEVCDGDDDS) has biased composition (acidic residues). Basic and acidic residues predominate over residues 339-350 (NNEHEAREKAEE). A binding to the DYNLT2B-DYNLT1/DYNLT3 dimer region spans residues 416 to 495 (ASHRQKSRSQ…DIQTEDIETR (80 aa)). WD repeat units lie at residues 637–677 (ICES…RIHH), 718–764 (AYKK…KADI), 850–890 (VRPI…PIMQ), and 895–935 (TSGH…LGPV).

It belongs to the dynein light intermediate chain family. Intermediate chain of the cytoplasmic dynein complex 2, a multisubunit complex, composed at least of eleven different proteins. The cytoplasmic dynein 2 complex consists of two catalytic heavy chains (HCs) and a number of non-catalytic subunits presented by intermediate chains (ICs), light intermediate chains (LICs) and light chains (LCs). Among them, a heavy chain (DYNC2H1), two intermediate chains (DYNC2I2 and DYNC2I1), a light intermediate chain (DYNC2LI1), and a light chain (DYNLT2B) are unique to the cytoplasmic dynein complex 2, but a subset of the light chains are also shared by dynein-1 and dynein-2 complexes. Interacts with DYNC2I2; their C-terminal domains each bind a copy of the heavy chain, and their extended N-terminal regions are held together by an array of light chain dimers. Interacts with DYNLT2B. Interacts (via the N-terminal half) with DYNLT2B-DYNLT1 dimer or with DYNLT2B-DYNLT3 dimer; this interaction is crucial for retrograde trafficking of ciliary proteins.

It is found in the cell projection. The protein localises to the cilium. It localises to the cytoplasm. Its subcellular location is the cytoskeleton. The protein resides in the microtubule organizing center. It is found in the centrosome. In terms of biological role, acts as one of several non-catalytic accessory components of the cytoplasmic dynein 2 complex (dynein-2 complex), a motor protein complex that drives the movement of cargos along microtubules within cilia and flagella in concert with the intraflagellar transport (IFT) system. DYNC2I1 plays a major role in retrograde ciliary protein trafficking in cilia and flagella. Also requires to maintain a functional transition zone. This Mus musculus (Mouse) protein is Cytoplasmic dynein 2 intermediate chain 1 (Dync2i1).